Consider the following 102-residue polypeptide: Small ribosomal subunit protein uS10 (102 aa).

The protein belongs to the universal ribosomal protein uS10 family. As to quaternary structure, part of the 30S ribosomal subunit.

Involved in the binding of tRNA to the ribosomes. The chain is Small ribosomal subunit protein uS10 from Brucella abortus (strain S19).